The chain runs to 435 residues: Trigger factor (435 aa).

One can recognise a PPIase FKBP-type domain in the interval 163-248 (GDRVTIDFEG…LTRIEAQNLP (86 aa)).

Belongs to the FKBP-type PPIase family. Tig subfamily.

The protein resides in the cytoplasm. The catalysed reaction is [protein]-peptidylproline (omega=180) = [protein]-peptidylproline (omega=0). Involved in protein export. Acts as a chaperone by maintaining the newly synthesized protein in an open conformation. Functions as a peptidyl-prolyl cis-trans isomerase. The chain is Trigger factor from Leptothrix cholodnii (strain ATCC 51168 / LMG 8142 / SP-6) (Leptothrix discophora (strain SP-6)).